A 498-amino-acid polypeptide reads, in one-letter code: Polyphosphate:AMP phosphotransferase (498 aa).

PPK2 stretches follow at residues 11 to 234 (IDDD…MQAA) and 269 to 491 (LSKE…LEKA).

It belongs to the polyphosphate kinase 2 (PPK2) family. Class II subfamily.

The catalysed reaction is [phosphate](n) + ADP = [phosphate](n+1) + AMP. In terms of biological role, uses inorganic polyphosphate (polyP) as a donor to convert AMP to ADP. Can also convert GMP to GDP, with lower efficiency. The polypeptide is Polyphosphate:AMP phosphotransferase (Pseudomonas syringae pv. tomato (strain ATCC BAA-871 / DC3000)).